We begin with the raw amino-acid sequence, 310 residues long: MKKEKIIVIVGPTGVGKTALSLQVAQQLKGEIISGDAMQVYRHLDIGTAKVTPAEQAIAPHHLIDVADIDERFTAFNFQQQGQQLITKITDRQHLPLIVGGTGLYLQALLYDMTLGSATDAEQDFSIRNKWQAYLEQHSETDLWQALAKIDPDAAAKIPAANTRRVIRALEVYETTGVLFSQQKPKELRYDTFIIGLNCERPVLYERINQRVDQMVDAGLIEEARWAYERRATSPQAVRGIGYKEFFPYFDGECSLEAAIDQVKQNSRHYAKRQLTWFRNQIPVNWYNLVEHQEADLARIQEDIQTWLQK.

11–18 is a binding site for ATP; sequence GPTGVGKT. 13 to 18 serves as a coordination point for substrate; it reads TGVGKT.

It belongs to the IPP transferase family. Monomer. Mg(2+) serves as cofactor.

The enzyme catalyses adenosine(37) in tRNA + dimethylallyl diphosphate = N(6)-dimethylallyladenosine(37) in tRNA + diphosphate. Functionally, catalyzes the transfer of a dimethylallyl group onto the adenine at position 37 in tRNAs that read codons beginning with uridine, leading to the formation of N6-(dimethylallyl)adenosine (i(6)A). This is tRNA dimethylallyltransferase from Latilactobacillus sakei subsp. sakei (strain 23K) (Lactobacillus sakei subsp. sakei).